Reading from the N-terminus, the 238-residue chain is 1-(5-phosphoribosyl)-5-[(5-phosphoribosylamino)methylideneamino] imidazole-4-carboxamide isomerase (238 aa).

Asp8 functions as the Proton acceptor in the catalytic mechanism. The active-site Proton donor is the Asp129.

It belongs to the HisA/HisF family.

The protein resides in the cytoplasm. The catalysed reaction is 1-(5-phospho-beta-D-ribosyl)-5-[(5-phospho-beta-D-ribosylamino)methylideneamino]imidazole-4-carboxamide = 5-[(5-phospho-1-deoxy-D-ribulos-1-ylimino)methylamino]-1-(5-phospho-beta-D-ribosyl)imidazole-4-carboxamide. It functions in the pathway amino-acid biosynthesis; L-histidine biosynthesis; L-histidine from 5-phospho-alpha-D-ribose 1-diphosphate: step 4/9. This is 1-(5-phosphoribosyl)-5-[(5-phosphoribosylamino)methylideneamino] imidazole-4-carboxamide isomerase from Anaeromyxobacter dehalogenans (strain 2CP-C).